A 376-amino-acid polypeptide reads, in one-letter code: Thymidine kinase (376 aa).

The segment at 1 to 38 (MASYPCHQHASAFDQAARSRGHNNRRTALRPRRQQKAT) is disordered. Residues 19–35 (SRGHNNRRTALRPRRQQ) show a composition bias toward basic residues. Position 56–63 (56–63 (GPHGMGKT)) interacts with ATP. The active-site Proton acceptor is Glu-83. Residues Tyr-101 and Gln-125 each contribute to the substrate site. Arg-216 provides a ligand contact to ATP. Residue Arg-222 coordinates substrate.

This sequence belongs to the herpesviridae thymidine kinase family. In terms of assembly, homodimer.

It carries out the reaction thymidine + ATP = dTMP + ADP + H(+). Catalyzes the transfer of the gamma-phospho group of ATP to thymidine to generate dTMP in the salvage pathway of pyrimidine synthesis. The dTMP serves as a substrate for DNA polymerase during viral DNA replication. Allows the virus to be reactivated and to grow in non-proliferative cells lacking a high concentration of phosphorylated nucleic acid precursors. This chain is Thymidine kinase, found in Homo sapiens (Human).